We begin with the raw amino-acid sequence, 505 residues long: AMP phosphorylase (505 aa).

Residues glycine 169, 195-200 (SRAITG), and threonine 204 each bind AMP. Aspartate 257 functions as the Proton donor in the catalytic mechanism. Residues serine 265 and lysine 289 each contribute to the AMP site.

Belongs to the thymidine/pyrimidine-nucleoside phosphorylase family. Type 2 subfamily.

It carries out the reaction AMP + phosphate = alpha-D-ribose 1,5-bisphosphate + adenine. The catalysed reaction is CMP + phosphate = cytosine + alpha-D-ribose 1,5-bisphosphate. It catalyses the reaction UMP + phosphate = alpha-D-ribose 1,5-bisphosphate + uracil. Catalyzes the conversion of AMP and phosphate to adenine and ribose 1,5-bisphosphate (R15P). Exhibits phosphorylase activity toward CMP and UMP in addition to AMP. Functions in an archaeal AMP degradation pathway, together with R15P isomerase and RubisCO. This chain is AMP phosphorylase, found in Methanocorpusculum labreanum (strain ATCC 43576 / DSM 4855 / Z).